A 298-amino-acid chain; its full sequence is Glycine--tRNA ligase alpha subunit (298 aa).

This sequence belongs to the class-II aminoacyl-tRNA synthetase family. Tetramer of two alpha and two beta subunits.

The protein resides in the cytoplasm. The enzyme catalyses tRNA(Gly) + glycine + ATP = glycyl-tRNA(Gly) + AMP + diphosphate. The polypeptide is Glycine--tRNA ligase alpha subunit (Helicobacter pylori (strain HPAG1)).